The sequence spans 484 residues: tRNA sulfurtransferase (484 aa).

The THUMP domain maps to 63–167; sequence ELFAERLAHI…RDKLYMVSQR (105 aa). ATP contacts are provided by residues 185–186, K267, G289, and Q298; that span reads LI. A disulfide bond links C346 and C458. Positions 406–484 constitute a Rhodanese domain; the sequence is AAGNEVIIDI…GYNNVKVYRP (79 aa). C458 serves as the catalytic Cysteine persulfide intermediate.

It belongs to the ThiI family.

The protein localises to the cytoplasm. It carries out the reaction [ThiI sulfur-carrier protein]-S-sulfanyl-L-cysteine + a uridine in tRNA + 2 reduced [2Fe-2S]-[ferredoxin] + ATP + H(+) = [ThiI sulfur-carrier protein]-L-cysteine + a 4-thiouridine in tRNA + 2 oxidized [2Fe-2S]-[ferredoxin] + AMP + diphosphate. It catalyses the reaction [ThiS sulfur-carrier protein]-C-terminal Gly-Gly-AMP + S-sulfanyl-L-cysteinyl-[cysteine desulfurase] + AH2 = [ThiS sulfur-carrier protein]-C-terminal-Gly-aminoethanethioate + L-cysteinyl-[cysteine desulfurase] + A + AMP + 2 H(+). It participates in cofactor biosynthesis; thiamine diphosphate biosynthesis. Functionally, catalyzes the ATP-dependent transfer of a sulfur to tRNA to produce 4-thiouridine in position 8 of tRNAs, which functions as a near-UV photosensor. Also catalyzes the transfer of sulfur to the sulfur carrier protein ThiS, forming ThiS-thiocarboxylate. This is a step in the synthesis of thiazole, in the thiamine biosynthesis pathway. The sulfur is donated as persulfide by IscS. The polypeptide is tRNA sulfurtransferase (Shewanella amazonensis (strain ATCC BAA-1098 / SB2B)).